We begin with the raw amino-acid sequence, 783 residues long: Spindle pole body protein ppc89 (783 aa).

Residue S157 is modified to Phosphoserine. 4 disordered regions span residues 180–216, 434–458, 471–504, and 528–610; these read FDSP…ETPS, KESN…MNEA, ENKS…PTSG, and LSQS…MKGN. Composition is skewed to polar residues over residues 201 to 216, 437 to 453, and 474 to 504; these read RSKT…ETPS, NVTS…SKPL, and SGAN…PTSG. The span at 536-551 shows a compositional bias: basic residues; that stretch reads PVKHRKRRPKSKRRIT. Residues 566-590 show a composition bias toward acidic residues; sequence ESDEGSEEISLDSEYSDILSDDGDF.

The protein resides in the cytoplasm. The protein localises to the cytoskeleton. It localises to the microtubule organizing center. Its subcellular location is the spindle pole body. Functionally, has a role in meiosis. In Schizosaccharomyces pombe (strain 972 / ATCC 24843) (Fission yeast), this protein is Spindle pole body protein ppc89 (ppc89).